Consider the following 122-residue polypeptide: Large ribosomal subunit protein uL14 (122 aa).

It belongs to the universal ribosomal protein uL14 family. As to quaternary structure, part of the 50S ribosomal subunit. Forms a cluster with proteins L3 and L19. In the 70S ribosome, L14 and L19 interact and together make contacts with the 16S rRNA in bridges B5 and B8.

Binds to 23S rRNA. Forms part of two intersubunit bridges in the 70S ribosome. The polypeptide is Large ribosomal subunit protein uL14 (Trichormus variabilis (strain ATCC 29413 / PCC 7937) (Anabaena variabilis)).